The chain runs to 443 residues: D(2) dopamine receptor (443 aa).

The Extracellular portion of the chain corresponds to 1-37 (MDPLNLSWYDDDPESRNWSRPFNGSEGKVGKPHYNYY). N-linked (GlcNAc...) asparagine glycans are attached at residues Asn5, Asn17, and Asn23. A helical membrane pass occupies residues 38–60 (AMLLTLLIFVIVFGNVLVCMAVS). The Cytoplasmic portion of the chain corresponds to 61–70 (REKALQTTTN). Residues 71–93 (YLIVSLAVADLLVATLVMPWVVY) traverse the membrane as a helical segment. Residues 94–108 (LEVVGEWKFSRIHCD) are Extracellular-facing. Cysteines 107 and 182 form a disulfide. A helical membrane pass occupies residues 109-130 (IFVTLDVMMCTASILNLCAISI). The Cytoplasmic portion of the chain corresponds to 131 to 151 (DRYTAVAMPMLYNTRYSSKRR). Residues 152–172 (VTVMIAIVWVLSFTISCPLLF) form a helical membrane-spanning segment. Over 173–188 (GLNNTDQNECIIANPA) the chain is Extracellular. The helical transmembrane segment at 189-213 (FVVYSSVVSFYVPFIVTLLVYIKIY) threads the bilayer. The interval 211 to 373 (KIYIVLRRRR…SQQKEKKATQ (163 aa)) is interaction with PPP1R9B. Residues 214–373 (IVLRRRRKRV…SQQKEKKATQ (160 aa)) lie on the Cytoplasmic side of the membrane. Residues 282-331 (EMLSSTSPPERTRYSPIPPSHHQLTLPDPSHHGLHSTANSPVKPEKNGHA) form a disordered region. A helical membrane pass occupies residues 374-395 (MLAIVLGVFIICWLPFFITHIL). Over 396–409 (NIHCDCNIPPVLYS) the chain is Extracellular. Cysteines 399 and 401 form a disulfide. A helical membrane pass occupies residues 410-431 (AFTWLGYVNSAVNPIIYTTFNV). Over 432–443 (EFRKAFMKILHC) the chain is Cytoplasmic. The S-palmitoyl cysteine moiety is linked to residue Cys443.

Belongs to the G-protein coupled receptor 1 family. As to quaternary structure, forms homo- and heterooligomers with DRD4. The interaction with DRD4 may modulate agonist-induced downstream signaling. Interacts with CADPS and CADPS2. Interacts with GPRASP1, PPP1R9B and CLIC6. Interacts with ARRB2. Interacts with HTR2A. Interacts with DRD1. Interacts with KCNA2. Palmitoylated. Palmitoylation which is required for proper localization to the plasma membrane and stability of the receptor could be carried on by ZDHHC4, ZDHHC3 and ZDHHC8.

The protein localises to the cell membrane. It is found in the golgi apparatus membrane. Its function is as follows. Dopamine receptor whose activity is mediated by G proteins which inhibit adenylyl cyclase. Positively regulates postnatal regression of retinal hyaloid vessels via suppression of VEGFR2/KDR activity, downstream of OPN5. The polypeptide is D(2) dopamine receptor (DRD2) (Mustela putorius furo (European domestic ferret)).